Here is a 124-residue protein sequence, read N- to C-terminus: Small ribosomal subunit protein uS12 (124 aa).

The tract at residues 1–24 (MPTINQLIKKPRKSQKEKTASPAL) is disordered. Aspartate 89 is modified (3-methylthioaspartic acid).

The protein belongs to the universal ribosomal protein uS12 family. As to quaternary structure, part of the 30S ribosomal subunit. Contacts proteins S8 and S17. May interact with IF1 in the 30S initiation complex.

In terms of biological role, with S4 and S5 plays an important role in translational accuracy. Functionally, interacts with and stabilizes bases of the 16S rRNA that are involved in tRNA selection in the A site and with the mRNA backbone. Located at the interface of the 30S and 50S subunits, it traverses the body of the 30S subunit contacting proteins on the other side and probably holding the rRNA structure together. The combined cluster of proteins S8, S12 and S17 appears to hold together the shoulder and platform of the 30S subunit. The chain is Small ribosomal subunit protein uS12 from Borrelia hermsii (strain HS1 / DAH).